The primary structure comprises 149 residues: D-aminoacyl-tRNA deacylase (149 aa).

The Gly-cisPro motif, important for rejection of L-amino acids motif lies at 137–138 (GP).

Belongs to the DTD family. In terms of assembly, homodimer.

Its subcellular location is the cytoplasm. It carries out the reaction glycyl-tRNA(Ala) + H2O = tRNA(Ala) + glycine + H(+). The catalysed reaction is a D-aminoacyl-tRNA + H2O = a tRNA + a D-alpha-amino acid + H(+). Functionally, an aminoacyl-tRNA editing enzyme that deacylates mischarged D-aminoacyl-tRNAs. Also deacylates mischarged glycyl-tRNA(Ala), protecting cells against glycine mischarging by AlaRS. Acts via tRNA-based rather than protein-based catalysis; rejects L-amino acids rather than detecting D-amino acids in the active site. By recycling D-aminoacyl-tRNA to D-amino acids and free tRNA molecules, this enzyme counteracts the toxicity associated with the formation of D-aminoacyl-tRNA entities in vivo and helps enforce protein L-homochirality. This chain is D-aminoacyl-tRNA deacylase, found in Clostridium botulinum (strain Eklund 17B / Type B).